Reading from the N-terminus, the 440-residue chain is Heat stress transcription factor A-4b (440 aa).

Residues 121-181 are a coiled coil; the sequence is NERKDYEEEI…QRSLISYVRE (61 aa). A hydrophobic repeat HR-A/B region spans residues 133–183; it reads LKSDNAALSSELQNNTLKKLNMEKRMQALEEKLFVVEDQQRSLISYVREIV. Positions 158 to 163 match the Nuclear export signal motif; sequence MQALEE. The Nuclear localization signal motif lies at 200–204; the sequence is RKKRR. The segment at 264–417 is disordered; the sequence is DISYDDGVPG…EMKSGDRQHL (154 aa). Residues 295–305 show a composition bias toward polar residues; the sequence is SPPTRMRTSSA. The span at 333–343 shows a compositional bias: basic and acidic residues; sequence SRVDTRAKVSE. Residues 375–384 carry the AHA motif; that stretch reads DGFWQQFLTE. The span at 380–390 shows a compositional bias: polar residues; the sequence is QFLTEQPGSSD. The span at 391 to 417 shows a compositional bias: basic and acidic residues; that stretch reads AHQEAQSERRDGGNKVDEMKSGDRQHL.

It belongs to the HSF family. Class A subfamily. In terms of assembly, homotrimer. Post-translationally, exhibits temperature-dependent phosphorylation.

The protein resides in the cytoplasm. It is found in the nucleus. In terms of biological role, transcriptional regulator that specifically binds DNA of heat shock promoter elements (HSE). In Oryza sativa subsp. japonica (Rice), this protein is Heat stress transcription factor A-4b (HSFA4B).